Here is a 356-residue protein sequence, read N- to C-terminus: Phenylalanine--tRNA ligase alpha subunit (356 aa).

Glu-260 provides a ligand contact to Mg(2+).

Belongs to the class-II aminoacyl-tRNA synthetase family. Phe-tRNA synthetase alpha subunit type 1 subfamily. In terms of assembly, tetramer of two alpha and two beta subunits. The cofactor is Mg(2+).

It localises to the cytoplasm. It carries out the reaction tRNA(Phe) + L-phenylalanine + ATP = L-phenylalanyl-tRNA(Phe) + AMP + diphosphate + H(+). In Gluconacetobacter diazotrophicus (strain ATCC 49037 / DSM 5601 / CCUG 37298 / CIP 103539 / LMG 7603 / PAl5), this protein is Phenylalanine--tRNA ligase alpha subunit.